The primary structure comprises 142 residues: Putative pre-16S rRNA nuclease (142 aa).

It belongs to the YqgF nuclease family.

It localises to the cytoplasm. Functionally, could be a nuclease involved in processing of the 5'-end of pre-16S rRNA. The sequence is that of Putative pre-16S rRNA nuclease from Chlorobaculum tepidum (strain ATCC 49652 / DSM 12025 / NBRC 103806 / TLS) (Chlorobium tepidum).